The primary structure comprises 400 residues: Exodeoxyribonuclease 7 large subunit (400 aa).

It belongs to the XseA family. In terms of assembly, heterooligomer composed of large and small subunits.

It localises to the cytoplasm. The enzyme catalyses Exonucleolytic cleavage in either 5'- to 3'- or 3'- to 5'-direction to yield nucleoside 5'-phosphates.. In terms of biological role, bidirectionally degrades single-stranded DNA into large acid-insoluble oligonucleotides, which are then degraded further into small acid-soluble oligonucleotides. In Clostridium perfringens (strain ATCC 13124 / DSM 756 / JCM 1290 / NCIMB 6125 / NCTC 8237 / Type A), this protein is Exodeoxyribonuclease 7 large subunit.